A 426-amino-acid polypeptide reads, in one-letter code: 3-phosphoshikimate 1-carboxyvinyltransferase (426 aa).

3-phosphoshikimate is bound by residues Lys22, Ser23, and Arg27. A phosphoenolpyruvate-binding site is contributed by Lys22. 2 residues coordinate phosphoenolpyruvate: Gly96 and Arg124. 7 residues coordinate 3-phosphoshikimate: Ser170, Ser171, Gln172, Ser198, Asp314, Asn337, and Lys341. Gln172 contacts phosphoenolpyruvate. The Proton acceptor role is filled by Asp314. Phosphoenolpyruvate-binding residues include Arg345, Arg387, and Lys412.

It belongs to the EPSP synthase family. In terms of assembly, monomer.

It is found in the cytoplasm. It catalyses the reaction 3-phosphoshikimate + phosphoenolpyruvate = 5-O-(1-carboxyvinyl)-3-phosphoshikimate + phosphate. Its pathway is metabolic intermediate biosynthesis; chorismate biosynthesis; chorismate from D-erythrose 4-phosphate and phosphoenolpyruvate: step 6/7. Its function is as follows. Catalyzes the transfer of the enolpyruvyl moiety of phosphoenolpyruvate (PEP) to the 5-hydroxyl of shikimate-3-phosphate (S3P) to produce enolpyruvyl shikimate-3-phosphate and inorganic phosphate. The chain is 3-phosphoshikimate 1-carboxyvinyltransferase from Vibrio campbellii (strain ATCC BAA-1116).